Reading from the N-terminus, the 872-residue chain is Alanine--tRNA ligase (872 aa).

Histidine 567, histidine 571, cysteine 669, and histidine 673 together coordinate Zn(2+).

Belongs to the class-II aminoacyl-tRNA synthetase family. Requires Zn(2+) as cofactor.

The protein resides in the cytoplasm. The catalysed reaction is tRNA(Ala) + L-alanine + ATP = L-alanyl-tRNA(Ala) + AMP + diphosphate. In terms of biological role, catalyzes the attachment of alanine to tRNA(Ala) in a two-step reaction: alanine is first activated by ATP to form Ala-AMP and then transferred to the acceptor end of tRNA(Ala). Also edits incorrectly charged Ser-tRNA(Ala) and Gly-tRNA(Ala) via its editing domain. The protein is Alanine--tRNA ligase of Streptococcus pneumoniae (strain CGSP14).